Reading from the N-terminus, the 106-residue chain is Large ribosomal subunit protein uL23 (106 aa).

Belongs to the universal ribosomal protein uL23 family. In terms of assembly, part of the 50S ribosomal subunit. Contacts protein L29, and trigger factor when it is bound to the ribosome.

One of the early assembly proteins it binds 23S rRNA. One of the proteins that surrounds the polypeptide exit tunnel on the outside of the ribosome. Forms the main docking site for trigger factor binding to the ribosome. The protein is Large ribosomal subunit protein uL23 of Acinetobacter baylyi (strain ATCC 33305 / BD413 / ADP1).